Here is a 132-residue protein sequence, read N- to C-terminus: Small ribosomal subunit protein uS8 (132 aa).

The protein belongs to the universal ribosomal protein uS8 family. Part of the 30S ribosomal subunit. Contacts proteins S5 and S12.

Functionally, one of the primary rRNA binding proteins, it binds directly to 16S rRNA central domain where it helps coordinate assembly of the platform of the 30S subunit. The sequence is that of Small ribosomal subunit protein uS8 from Rhizobium meliloti (strain 1021) (Ensifer meliloti).